Consider the following 2036-residue polypeptide: Transmembrane channel-like protein (2036 aa).

Disordered stretches follow at residues Met1–Glu178 and Ser194–Gln243. Over Met1–Arg353 the chain is Cytoplasmic. The span at Val58–Gly73 shows a compositional bias: low complexity. Positions Ala74–Val90 are enriched in polar residues. Residues Ala125–Glu134 show a composition bias toward basic and acidic residues. Acidic residues predominate over residues Phe166–Glu178. Basic residues predominate over residues Tyr198–Arg208. Residues His216–Arg225 show a composition bias toward basic and acidic residues. The span at Ser227 to Gln243 shows a compositional bias: polar residues. Residues Trp354–Glu374 traverse the membrane as a helical segment. Topologically, residues Tyr375–Arg395 are extracellular. A helical membrane pass occupies residues Val396–Gly418. At Tyr419–Lys432 the chain is on the cytoplasmic side. Residues Leu433 to Leu453 form a helical membrane-spanning segment. The Extracellular portion of the chain corresponds to Arg454–Arg526. Residues Ile527–Leu547 traverse the membrane as a helical segment. At Val548–Asn567 the chain is on the cytoplasmic side. Residues Val568–Glu588 form a helical membrane-spanning segment. The Extracellular portion of the chain corresponds to Asn589–Gln599. The chain crosses the membrane as a helical span at residues Leu600–Tyr620. Topologically, residues Lys621–Gln1308 are cytoplasmic. Disordered regions lie at residues Thr789–Thr839, Lys860–Ala967, Phe996–Pro1027, Leu1066–Glu1143, and Gly1186–Thr1205. Positions Ile870–Ala885 are enriched in polar residues. Positions Thr886–Thr906 are enriched in low complexity. Positions Thr933–Pro952 are enriched in polar residues. Residues Ser953–Ala967 are compositionally biased toward acidic residues. 3 stretches are compositionally biased toward low complexity: residues Arg1069–Thr1083, Arg1091–Thr1100, and Thr1107–Thr1130. A helical membrane pass occupies residues Val1309–Ile1329. Residues Met1330–Tyr1358 are Extracellular-facing. The chain crosses the membrane as a helical span at residues Leu1359–Trp1379. Residues Leu1380–Thr1423 are Cytoplasmic-facing. The helical transmembrane segment at Val1424–Ala1444 threads the bilayer. Topologically, residues Leu1445–Lys2036 are extracellular. Disordered regions lie at residues Leu1527 to Gln1572, Glu1592 to Gly1841, and Lys1859 to Ile1990. Basic and acidic residues-rich tracts occupy residues Ser1538–Phe1566, Lys1614–Asp1640, Ser1658–Thr1668, His1727–Pro1743, and Pro1777–Ser1793. Residues Asn1806–Ser1838 show a composition bias toward polar residues. The span at Val1890 to Ala1899 shows a compositional bias: low complexity. Residues Pro1903–Ser1914 are compositionally biased toward pro residues. The span at Gln1976 to Ile1990 shows a compositional bias: polar residues.

It belongs to the TMC family. In terms of tissue distribution, expressed in multi-dendritic neurons of the labellum (md-L), which extend elaborate dendritic arbors innervating the bases of taste hairs (at protein level). In larvae, expressed in class I and class II dendritic arborization (da) neurons and bipolar dendrite (bd) neurons (at protein level). In adults, expressed in various sensory neurons including those in the mouth parts, olfactory neurons in the antenna, wing bristle neurons, haltere neurons, arista neurons, and many other sensory neurons, including a subset of chordotonal (Cho) neurons. Expressed in md-L axon terminals, including those that project into the subesophageal zone (SEZ). Also expressed in a small number of local neurons in the adult ventral nerve cord (VNC), and projections extending from a few neurons in the legs or wing hinges. In the adult mouth, expressed in a few multi-dendritic neurons of the ventral cibarial sensory organ (VCSO); the multiple elaborate dendritic branches form a brush-like structure that faces the luminal side of the food-passing tunnel. Also expressed in the oviduct and uterus of adult females.

Its subcellular location is the cell membrane. The protein resides in the cell projection. It is found in the dendrite. Its function is as follows. Probable ion channel. Component of mechanosensitive neurons that participates in proprioception, sensing food texture, and directing egg-laying site selection (oviposition). Component of multi-dendritic neurons of the labellum (md-L) where it is required for sensing the hardness and viscosity of their food, enabling them to behaviorally discriminate their preferred softness and smoothness from harder and stickier food options. Required as part of oviposition site selection process to relay mechanosensory and chemosensory information on the hardness and sweetness of potential egg-laying substrates, thus ensuring females select the most optimal site for their eggs survival. Females determine the softest substrate for their eggs first by making a coarse evaluation of substrate hardness using mechanosensitive channels nan and Piezo in the leg tarsal bristles, followed by a much finer assessment using nan, iav and Tmc mechanosensitive channels on the labellum. This protein is required to sense subtle differences in substrate stiffness (between 0.25% and 0.3% agarose), likely acting in the md-L neurons. Also required in neurons on the labellum, including the md-Ls, and possibly in the brain, to inhibit discrimination of egg-laying substrates of different hardness if the substrate contains sucrose. During oviposition evaluation, activation of sweet neurons by sucrose enhances the activity of the Tmc neurons resulting in females losing their softness preference in favor of egg-laying sites that contain sucrose. Acts in the larvae peripheral sensory neurons, to contribute to proprioception and sensory feedback for normal forward crawling behavior. Required for the normal activity of the proprioceptive sensory dendrites, ddaE which show preferential responses to forward locomotion, and ddaD which show preferential responses to backward locomotion. This chain is Transmembrane channel-like protein, found in Drosophila melanogaster (Fruit fly).